Reading from the N-terminus, the 380-residue chain is 1-deoxy-D-xylulose 5-phosphate reductoisomerase (380 aa).

NADPH-binding residues include threonine 10, glycine 11, serine 12, isoleucine 13, glycine 36, arginine 37, asparagine 38, and asparagine 120. Position 121 (lysine 121) interacts with 1-deoxy-D-xylulose 5-phosphate. Position 122 (glutamate 122) interacts with NADPH. Aspartate 146 lines the Mn(2+) pocket. 1-deoxy-D-xylulose 5-phosphate contacts are provided by serine 147, glutamate 148, serine 172, and histidine 195. Mn(2+) is bound at residue glutamate 148. Residue glycine 201 participates in NADPH binding. Serine 208, asparagine 213, lysine 214, and glutamate 217 together coordinate 1-deoxy-D-xylulose 5-phosphate. Mn(2+) is bound at residue glutamate 217.

This sequence belongs to the DXR family. Mg(2+) is required as a cofactor. Requires Mn(2+) as cofactor.

It carries out the reaction 2-C-methyl-D-erythritol 4-phosphate + NADP(+) = 1-deoxy-D-xylulose 5-phosphate + NADPH + H(+). The protein operates within isoprenoid biosynthesis; isopentenyl diphosphate biosynthesis via DXP pathway; isopentenyl diphosphate from 1-deoxy-D-xylulose 5-phosphate: step 1/6. Functionally, catalyzes the NADPH-dependent rearrangement and reduction of 1-deoxy-D-xylulose-5-phosphate (DXP) to 2-C-methyl-D-erythritol 4-phosphate (MEP). The chain is 1-deoxy-D-xylulose 5-phosphate reductoisomerase from Listeria monocytogenes serotype 4a (strain HCC23).